Reading from the N-terminus, the 467-residue chain is Serine/threonine-protein kinase US3 homolog (467 aa).

The tract at residues 64–155 (GPEVAPPART…PAGGVTREEA (92 aa)) is disordered. A compositionally biased stretch (basic and acidic residues) spans 99-111 (NERRAATGDEKES). Over residues 117-144 (NESESESESESESESGADDGDWDDDDDA) the composition is skewed to acidic residues. The Protein kinase domain occupies 164-462 (FRIIRRLTPG…AAELLEHPVF (299 aa)). ATP contacts are provided by residues 170 to 178 (LTPGSEGRV) and K194. D279 serves as the catalytic Proton acceptor.

It belongs to the protein kinase superfamily. Ser/Thr protein kinase family. Post-translationally, phosphorylated by UL13 homolog; this phosphorylation regulates subsequent phosphorylation of UL31 and UL34 homologs by US3. Autophosphorylated.

The protein resides in the host cytoplasm. Its subcellular location is the host nucleus. It catalyses the reaction L-seryl-[protein] + ATP = O-phospho-L-seryl-[protein] + ADP + H(+). The enzyme catalyses L-threonyl-[protein] + ATP = O-phospho-L-threonyl-[protein] + ADP + H(+). In terms of biological role, multifunctional serine/threonine kinase that plays a role in several processes including egress of virus particles from the nucleus, modulation of the actin cytoskeleton and inhibition of apoptosis. Phosphorylates UL31 and UL34 homologs, two critical regulators of capsid budding from nucleus to endoplasmic reticulum, thereby facilitating virion egress. Modulates and redistributes host components of the nuclear envelope, including LMNA, emerin/EMD and the nuclear matrix protein MATR3. Phosphorylates envelope glycoprotein B (gB), probably to direct it to the cell surface. Promotes virus intracellular spread by restructuring host cell cytoskeleton. Blocks host apoptosis to extend cell survival and allow efficient viral replication. Promotes viral gene expression by phosphorylating host HDAC2 to reduce viral genome silencing. In Bos taurus (Bovine), this protein is Serine/threonine-protein kinase US3 homolog.